A 160-amino-acid polypeptide reads, in one-letter code: uncharacterized protein (160 aa).

An N-terminal signal peptide occupies residues 1–23 (MSIPHSVFSALLVFVALATTTLA). Over 24-132 (STEACLPTNK…DPNTAYWSSD (109 aa)) the chain is Cytoplasmic. The chain crosses the membrane as a helical span at residues 133 to 155 (LFGFYTTPTNVTVEMTGYLIWSM). The Extracellular segment spans residues 156–160 (GNRRR).

To yeast protein FLO1.

It is found in the cell membrane. This is an uncharacterized protein from Saccharomyces cerevisiae (strain ATCC 204508 / S288c) (Baker's yeast).